The chain runs to 176 residues: Putative metal-dependent hydrolase BLi00869/BLi00870/BL03027 (176 aa).

Zn(2+) contacts are provided by H65, H158, and H162.

This sequence belongs to the metal hydrolase YfiT family. As to quaternary structure, homodimer. The cofactor is Zn(2+).

The protein resides in the cytoplasm. In terms of biological role, possible metal-dependent hydrolase. In Bacillus licheniformis (strain ATCC 14580 / DSM 13 / JCM 2505 / CCUG 7422 / NBRC 12200 / NCIMB 9375 / NCTC 10341 / NRRL NRS-1264 / Gibson 46), this protein is Putative metal-dependent hydrolase BLi00869/BLi00870/BL03027.